We begin with the raw amino-acid sequence, 470 residues long: Protein nucleotidyltransferase YdiU (470 aa).

ATP is bound by residues Gly86, Gly88, Arg89, Lys109, Asp121, Gly122, Arg172, and Arg179. Catalysis depends on Asp244, which acts as the Proton acceptor. Mg(2+) contacts are provided by Asn245 and Asp254. Asp254 lines the ATP pocket.

It belongs to the SELO family. Mg(2+) serves as cofactor. Mn(2+) is required as a cofactor.

The catalysed reaction is L-seryl-[protein] + ATP = 3-O-(5'-adenylyl)-L-seryl-[protein] + diphosphate. It catalyses the reaction L-threonyl-[protein] + ATP = 3-O-(5'-adenylyl)-L-threonyl-[protein] + diphosphate. It carries out the reaction L-tyrosyl-[protein] + ATP = O-(5'-adenylyl)-L-tyrosyl-[protein] + diphosphate. The enzyme catalyses L-histidyl-[protein] + UTP = N(tele)-(5'-uridylyl)-L-histidyl-[protein] + diphosphate. The catalysed reaction is L-seryl-[protein] + UTP = O-(5'-uridylyl)-L-seryl-[protein] + diphosphate. It catalyses the reaction L-tyrosyl-[protein] + UTP = O-(5'-uridylyl)-L-tyrosyl-[protein] + diphosphate. Functionally, nucleotidyltransferase involved in the post-translational modification of proteins. It can catalyze the addition of adenosine monophosphate (AMP) or uridine monophosphate (UMP) to a protein, resulting in modifications known as AMPylation and UMPylation. The polypeptide is Protein nucleotidyltransferase YdiU (Roseobacter denitrificans (strain ATCC 33942 / OCh 114) (Erythrobacter sp. (strain OCh 114))).